A 496-amino-acid chain; its full sequence is Transcription termination factor MTERF9, chloroplastic (496 aa).

Residues 1-44 constitute a chloroplast transit peptide; the sequence is MAGFSLYCFKNPRILFTLPSESPLFVLGSDKCSPATRRPSRKTR. Disordered regions lie at residues 57 to 90 and 102 to 155; these read IINPKKKSRYGQTLSPYDSDEDDDDDDDDDDDDW and YEKK…SWRL. Residues 74-90 are compositionally biased toward acidic residues; sequence DSDEDDDDDDDDDDDDW. Positions 105–123 are enriched in basic residues; the sequence is KKPKSHKQTIAKKSVKKGI. Over residues 146–155 the composition is skewed to basic and acidic residues; sequence SEKKKESWRL.

Belongs to the mTERF family.

It is found in the plastid. Its subcellular location is the chloroplast. Transcription termination factor required for processing and steady-state levels of plastid transcripts. May play a role in response to abiotic stresses. This chain is Transcription termination factor MTERF9, chloroplastic, found in Arabidopsis thaliana (Mouse-ear cress).